A 35-amino-acid chain; its full sequence is Alpha-amanitin proprotein 1 (35 aa).

A propeptide spanning residues Met-1–Pro-10 is cleaved from the precursor. Residue Ile-11 is modified to (3R,4R)-4,5-dihydroxyisoleucine; in form alpha-amanitin. At Ile-11 the chain carries (3R,4S)-4-hydroxyisoleucine; in form gamma-amanitin. Positions Ile-11–Pro-18 form a cross-link, cyclopeptide (Ile-Pro). A cross-link (2'-cysteinyl-6'-hydroxytryptophan sulfoxide (Trp-Cys)) is located at residues Trp-12–Cys-16. A 4-hydroxyproline modification is found at Pro-18. The propeptide occupies Cys-19–Cys-35.

Belongs to the MSDIN fungal toxin family. Processed by the macrocyclase-peptidase enzyme POPB to yield a toxic cyclic octapeptide. POPB first removes 10 residues from the N-terminus. Conformational trapping of the remaining peptide forces the enzyme to release this intermediate rather than proceed to macrocyclization. The enzyme rebinds the remaining peptide in a different conformation and catalyzes macrocyclization of the N-terminal 8 residues. In terms of tissue distribution, expressed in basidiocarps.

Its function is as follows. Major toxin belonging to the bicyclic octapeptides amatoxins that acts by binding non-competitively to RNA polymerase II and greatly slowing the elongation of transcripts from target promoters. The chain is Alpha-amanitin proprotein 1 from Amanita exitialis (Guangzhou destroying angel).